We begin with the raw amino-acid sequence, 93 residues long: Small ribosomal subunit protein uS19 (93 aa).

This sequence belongs to the universal ribosomal protein uS19 family.

In terms of biological role, protein S19 forms a complex with S13 that binds strongly to the 16S ribosomal RNA. The sequence is that of Small ribosomal subunit protein uS19 from Ligilactobacillus salivarius (strain UCC118) (Lactobacillus salivarius).